The following is a 76-amino-acid chain: uncharacterized protein (76 aa).

A run of 2 helical transmembrane segments spans residues 9–29 (AIGIVVHLIFIAVTWWALQAV) and 45–65 (LLMILLTIAIGTAVANFFLDY).

Its subcellular location is the cell membrane. This is an uncharacterized protein from Bacillus subtilis (strain 168).